The primary structure comprises 1017 residues: Sodium/potassium-transporting ATPase subunit alpha-2 (1017 aa).

The segment at 1 to 31 is disordered; sequence MDGREYSPAATTSENGGGRRKQKEKELDELK. Over 1-82 the chain is Cytoplasmic; sequence MDGREYSPAA…NALTPPPTTP (82 aa). Residues 77 to 79 are interaction with phosphoinositide-3 kinase; that stretch reads PPP. A helical transmembrane segment spans residues 83-103; that stretch reads EWVKFCRQLFGGFSILLWIGA. The Extracellular portion of the chain corresponds to 104-126; the sequence is ILCFLAYGIQAAMEDEPSNDNLY. Residues 127 to 147 form a helical membrane-spanning segment; sequence LGVVLAAVVIVTGCFSYYQEA. Residues 148–283 lie on the Cytoplasmic side of the membrane; sequence KSSKIMDSFK…VGRTPIAMEI (136 aa). The interval 207 to 228 is disordered; sequence KVDNSSLTGESEPQTRSPEFTH. Over residues 209–224 the composition is skewed to polar residues; it reads DNSSLTGESEPQTRSP. The helical transmembrane segment at 284 to 303 threads the bilayer; sequence EHFIRLITGVAVFLGLSFFI. Topologically, residues 304–315 are extracellular; it reads LSLILGYTWLEA. A helical transmembrane segment spans residues 316-333; that stretch reads VIFLIGIIVANVPEGLLA. At 334-766 the chain is on the cytoplasmic side; the sequence is TVTVCLTLTA…EEGRLIFDNL (433 aa). The active-site 4-aspartylphosphate intermediate is D371. K502 contacts ATP. D711 and D715 together coordinate Mg(2+). The helical transmembrane segment at 767–786 threads the bilayer; the sequence is KKSIAYTLTSNIPEITPFLL. The Extracellular portion of the chain corresponds to 787–796; the sequence is FIIANIPLPL. The helical transmembrane segment at 797-817 threads the bilayer; the sequence is GTVTILCIDLGTDMVPAISLA. Topologically, residues 818–837 are cytoplasmic; that stretch reads YEAAESDIMKRQPRNPRTDK. The helical transmembrane segment at 838-860 threads the bilayer; it reads LVNERLISMAYGQIGMIQALGGF. Over 861–912 the chain is Extracellular; that stretch reads FTYFVILAENGFLPARLLGVRLAWDDRSTNDLEDSYGQEWTYEQRKVVEFTC. The helical transmembrane segment at 913-932 threads the bilayer; it reads HTAFFASIVVVQWADLIICK. The Cytoplasmic segment spans residues 933-945; the sequence is TRRNSVFQQGMKN. S937 carries the phosphoserine; by PKA modification. Residues 946 to 964 form a helical membrane-spanning segment; it reads KILIFGLLEETALAAFLSY. At 965–979 the chain is on the extracellular side; it reads CPGMGVALRMYPLKV. A helical membrane pass occupies residues 980-1000; the sequence is TWWFCAFPYSLLIFAYDEVRK. The Cytoplasmic segment spans residues 1001 to 1017; that stretch reads LILRRYPGGWVEKETYY.

It belongs to the cation transport ATPase (P-type) (TC 3.A.3) family. Type IIC subfamily. As to quaternary structure, the sodium/potassium-transporting ATPase is composed of a catalytic alpha subunit, an auxiliary non-catalytic beta subunit and an additional regulatory subunit.

It is found in the membrane. Its subcellular location is the cell membrane. It carries out the reaction K(+)(out) + Na(+)(in) + ATP + H2O = K(+)(in) + Na(+)(out) + ADP + phosphate + H(+). Functionally, this is the catalytic component of the active enzyme, which catalyzes the hydrolysis of ATP coupled with the exchange of sodium and potassium ions across the plasma membrane. This action creates the electrochemical gradient of sodium and potassium ions, providing the energy for active transport of various nutrients. The chain is Sodium/potassium-transporting ATPase subunit alpha-2 (ATP1A2) from Gallus gallus (Chicken).